A 514-amino-acid polypeptide reads, in one-letter code: Embryonic protein UVS.2 (514 aa).

An N-terminal signal peptide occupies residues 1–19 (MDVKISAILLACIIQYAVS). Residues 90-286 (SAINDARFLW…SKINKLYECN (197 aa)) form the Peptidase M12A domain. Residue Asn112 is glycosylated (N-linked (GlcNAc...) asparagine). Intrachain disulfides connect Cys137-Cys285, Cys158-Cys178, Cys288-Cys314, Cys340-Cys363, Cys402-Cys428, and Cys455-Cys475. Position 186 (His186) interacts with Zn(2+). Residue Glu187 is part of the active site. Positions 190 and 196 each coordinate Zn(2+). N-linked (GlcNAc...) asparagine glycosylation is present at Asn199. 2 CUB domains span residues 288–400 (CSNL…YGSI) and 402–513 (CGGA…YTFV). N-linked (GlcNAc...) asparagine glycans are attached at residues Asn421, Asn427, and Asn464.

The cofactor is Zn(2+).

The polypeptide is Embryonic protein UVS.2 (Xenopus laevis (African clawed frog)).